Reading from the N-terminus, the 305-residue chain is HPr kinase/phosphorylase (305 aa).

Active-site residues include His136 and Lys157. Position 151–158 (151–158 (GESGIGKS)) interacts with ATP. Position 158 (Ser158) interacts with Mg(2+). Asp175 serves as the catalytic Proton acceptor; for phosphorylation activity. Proton donor; for dephosphorylation activity. The interval 198–207 (LEVRGLGIID) is important for the catalytic mechanism of both phosphorylation and dephosphorylation. A Mg(2+)-binding site is contributed by Glu199. Residue Arg240 is part of the active site. The tract at residues 261–266 (PIRPGR) is important for the catalytic mechanism of dephosphorylation.

Belongs to the HPrK/P family. Homohexamer. It depends on Mg(2+) as a cofactor.

It catalyses the reaction [HPr protein]-L-serine + ATP = [HPr protein]-O-phospho-L-serine + ADP + H(+). The catalysed reaction is [HPr protein]-O-phospho-L-serine + phosphate + H(+) = [HPr protein]-L-serine + diphosphate. Its function is as follows. Catalyzes the ATP- as well as the pyrophosphate-dependent phosphorylation of a specific serine residue in HPr, a phosphocarrier protein of the phosphoenolpyruvate-dependent sugar phosphotransferase system (PTS). HprK/P also catalyzes the pyrophosphate-producing, inorganic phosphate-dependent dephosphorylation (phosphorolysis) of seryl-phosphorylated HPr (P-Ser-HPr). The two antagonistic activities of HprK/P are regulated by several intracellular metabolites, which change their concentration in response to the absence or presence of rapidly metabolisable carbon sources (glucose, fructose, etc.) in the growth medium. Therefore, by controlling the phosphorylation state of HPr, HPrK/P is a sensor enzyme that plays a major role in the regulation of carbon metabolism and sugar transport: it mediates carbon catabolite repression (CCR), and regulates PTS-catalyzed carbohydrate uptake and inducer exclusion. The protein is HPr kinase/phosphorylase of Clostridium tetani (strain Massachusetts / E88).